The primary structure comprises 501 residues: Zinc finger protein 704 (501 aa).

Polar residues predominate over residues 80 to 96 (SLKSTCNGGQRDGLTQG). Disordered stretches follow at residues 80 to 138 (SLKS…HTRS), 183 to 203 (PLVR…WKDG), and 216 to 267 (WSWS…LFDE). The span at 115–137 (EEPRVLEHKRTGRALETEKDHTR) shows a compositional bias: basic and acidic residues. The segment at 281–306 (FKCLWKNCGKVLSTAAGIQRHIRTVH) adopts a C2H2-type zinc-finger fold. Disordered regions lie at residues 340–380 (SLSP…SRSA), 398–419 (PVTI…FSIS), 427–446 (FTGT…GEQH), and 453–472 (LSSP…GEGK). Positions 368-380 (SESSSSTPLSRSA) are enriched in low complexity. The CR1 motif lies at 472 to 476 (KKCRK). A CR2 motif is present at residues 490–494 (CRWKK).

It is found in the nucleus. Functionally, transcription factor. This Danio rerio (Zebrafish) protein is Zinc finger protein 704 (znf704).